The primary structure comprises 740 residues: Ion-translocating oxidoreductase complex subunit C (740 aa).

2 consecutive 4Fe-4S ferredoxin-type domains span residues 369 to 397 (GEPQ…QQLY) and 407 to 436 (KATT…VQYF). 8 residues coordinate [4Fe-4S] cluster: Cys377, Cys380, Cys383, Cys387, Cys416, Cys419, Cys422, and Cys426. The interval 602–714 (KLEQQQANAE…NAEPEEQIDP (113 aa)) is disordered. Positions 605 to 615 (QQQANAEPEQQ) are enriched in low complexity.

Belongs to the 4Fe4S bacterial-type ferredoxin family. RnfC subfamily. The complex is composed of six subunits: RsxA, RsxB, RsxC, RsxD, RsxE and RsxG. It depends on [4Fe-4S] cluster as a cofactor.

Its subcellular location is the cell inner membrane. Its function is as follows. Part of a membrane-bound complex that couples electron transfer with translocation of ions across the membrane. Required to maintain the reduced state of SoxR. The protein is Ion-translocating oxidoreductase complex subunit C of Escherichia coli O17:K52:H18 (strain UMN026 / ExPEC).